Consider the following 260-residue polypeptide: Membrane protein insertase YidC 1 (260 aa).

The first 22 residues, 1–22, serve as a signal peptide directing secretion; the sequence is MLKSYRAVLVSLSLLFVFVLSG. Cys-23 carries the N-palmitoyl cysteine lipid modification. Residue Cys-23 is the site of S-diacylglycerol cysteine attachment. 5 consecutive transmembrane segments (helical) span residues 29–49, 52–72, 133–153, 164–184, and 213–233; these read IDAHSTGIWDHYFVYPISFMI, VAHHIPGASFGIAIIIMTLVI, LAGCWPLLIQMPIFSALYYAI, FLWVNLGHADPYHILPIIAAL, and MPAMILFMGFAAPSGLVLYWI.

Belongs to the OXA1/ALB3/YidC family. Type 2 subfamily.

It localises to the cell membrane. Required for the insertion and/or proper folding and/or complex formation of integral membrane proteins into the membrane. Involved in integration of membrane proteins that insert both dependently and independently of the Sec translocase complex, as well as at least some lipoproteins. The sequence is that of Membrane protein insertase YidC 1 from Bacillus cereus (strain ATCC 14579 / DSM 31 / CCUG 7414 / JCM 2152 / NBRC 15305 / NCIMB 9373 / NCTC 2599 / NRRL B-3711).